Here is a 599-residue protein sequence, read N- to C-terminus: MTPLSHIRNFSIVAHIDHGKSTLADRLIQSTNTVADRDMKEQMLDSMDIERERGITIKAQTVRINYTAQNGEEYVLNLIDTPGHVDFAYEVSRSMRAVEGSLLVVDSTQGVEAQTLANVYHAIDADHEIVPVLNKIDLPASDCDRVAEQIEDVIGIDASGAIQVSAKTGQGIMETLESIVQNLPAPKGDRDAPLKAMLVDSWYDSYLGVIVLVRIMDGVLKKGDRIRMLSNNSTHNVDRIGVFRPEMTAIDELGPGEIGFLTASIKQVRDTRVGDTITHEKKGTEVALPGFKPSQPVVFCGLFPVDSSEFEELRDSIEKLALNDASFSYEMETSAALGFGFRCGFLGLLHLEVIRDRIEREYDIELITTAPSVIYHVYMKDGAMIELHNPADMPDLTLVDHLEEPRIKATILVPDDYLGDVLKLCQDRRGIQQDLTYAGSRAMVVYDLPLNEVVFDFYDRLKSVTKGYASFDYAMIGYRTDNLVKMSILVNDEPVDALSIMVHRERAEGRGRAMVEKLKDLIPRHMFKIPIQAAIGGKVIARETLSAMRKDVTAKCYGGDATRKRKLLDKQKAGKKKMRQFGKVDIPQEAFISALKMDG.

A tr-type G domain is found at 5–187 (SHIRNFSIVA…SIVQNLPAPK (183 aa)). GTP-binding positions include 17–22 (DHGKST) and 134–137 (NKID).

The protein belongs to the TRAFAC class translation factor GTPase superfamily. Classic translation factor GTPase family. LepA subfamily.

It localises to the cell inner membrane. It catalyses the reaction GTP + H2O = GDP + phosphate + H(+). Its function is as follows. Required for accurate and efficient protein synthesis under certain stress conditions. May act as a fidelity factor of the translation reaction, by catalyzing a one-codon backward translocation of tRNAs on improperly translocated ribosomes. Back-translocation proceeds from a post-translocation (POST) complex to a pre-translocation (PRE) complex, thus giving elongation factor G a second chance to translocate the tRNAs correctly. Binds to ribosomes in a GTP-dependent manner. In Roseobacter denitrificans (strain ATCC 33942 / OCh 114) (Erythrobacter sp. (strain OCh 114)), this protein is Elongation factor 4.